The following is a 442-amino-acid chain: Choline monooxygenase, chloroplastic (442 aa).

The transit peptide at 1–58 directs the protein to the chloroplast; sequence MASSASMLINYPTTFCGVRNSSNPNNDQFSDQINIPSSLNNNINISKITSKTNKIIPK. A Rieske domain is found at 123-229; sequence WQVAGYSDQI…VAIWGPFVLI (107 aa). 4 residues coordinate [2Fe-2S] cluster: C165, H167, C184, and H187. Residues H290 and H295 each contribute to the Fe cation site.

It belongs to the choline monooxygenase family. [2Fe-2S] cluster is required as a cofactor. The cofactor is Fe cation. Requires Mg(2+) as cofactor.

The protein localises to the plastid. Its subcellular location is the chloroplast stroma. It catalyses the reaction choline + 2 reduced [2Fe-2S]-[ferredoxin] + O2 + 2 H(+) = betaine aldehyde hydrate + 2 oxidized [2Fe-2S]-[ferredoxin] + H2O. Its pathway is amine and polyamine biosynthesis; betaine biosynthesis via choline pathway; betaine aldehyde from choline (monooxygenase route): step 1/1. Functionally, catalyzes the first step of the osmoprotectant glycine betaine synthesis. This is Choline monooxygenase, chloroplastic (CMO) from Amaranthus tricolor (Joseph's coat).